Consider the following 190-residue polypeptide: Holliday junction branch migration complex subunit RuvA (190 aa).

Positions 1–65 are domain I; that stretch reads MIGTLSGTVE…DGVSQLYGFA (65 aa). The domain II stretch occupies residues 66–137; that stretch reads NREEQNCMRM…LTPQVQKFEL (72 aa). The interval 137 to 141 is flexible linker; sequence LNRFA. The tract at residues 142–190 is domain III; the sequence is ATTRTDSEAVAALLSLGYERTAALGALQKVGVCDSTEDAVRRALLELSK.

Belongs to the RuvA family. As to quaternary structure, homotetramer. Forms an RuvA(8)-RuvB(12)-Holliday junction (HJ) complex. HJ DNA is sandwiched between 2 RuvA tetramers; dsDNA enters through RuvA and exits via RuvB. An RuvB hexamer assembles on each DNA strand where it exits the tetramer. Each RuvB hexamer is contacted by two RuvA subunits (via domain III) on 2 adjacent RuvB subunits; this complex drives branch migration. In the full resolvosome a probable DNA-RuvA(4)-RuvB(12)-RuvC(2) complex forms which resolves the HJ.

It localises to the cytoplasm. In terms of biological role, the RuvA-RuvB-RuvC complex processes Holliday junction (HJ) DNA during genetic recombination and DNA repair, while the RuvA-RuvB complex plays an important role in the rescue of blocked DNA replication forks via replication fork reversal (RFR). RuvA specifically binds to HJ cruciform DNA, conferring on it an open structure. The RuvB hexamer acts as an ATP-dependent pump, pulling dsDNA into and through the RuvAB complex. HJ branch migration allows RuvC to scan DNA until it finds its consensus sequence, where it cleaves and resolves the cruciform DNA. The chain is Holliday junction branch migration complex subunit RuvA from Anaplasma marginale (strain Florida).